The sequence spans 94 residues: Putative pterin-4-alpha-carbinolamine dehydratase (94 aa).

This sequence belongs to the pterin-4-alpha-carbinolamine dehydratase family.

The enzyme catalyses (4aS,6R)-4a-hydroxy-L-erythro-5,6,7,8-tetrahydrobiopterin = (6R)-L-erythro-6,7-dihydrobiopterin + H2O. This is Putative pterin-4-alpha-carbinolamine dehydratase from Mycobacterium tuberculosis (strain ATCC 25177 / H37Ra).